The sequence spans 171 residues: Large ribosomal subunit protein uL5 (171 aa).

Belongs to the universal ribosomal protein uL5 family. In terms of assembly, part of the 50S ribosomal subunit; contacts the 5S rRNA and probably tRNA. Forms a bridge to the 30S subunit in the 70S ribosome.

This is one of the proteins that bind and probably mediate the attachment of the 5S RNA into the large ribosomal subunit, where it forms part of the central protuberance. In the 70S ribosome it contacts protein S13 of the 30S subunit (bridge B1b), connecting the 2 subunits; this bridge is implicated in subunit movement. May contact the P site tRNA; the 5S rRNA and some of its associated proteins might help stabilize positioning of ribosome-bound tRNAs. This is Large ribosomal subunit protein uL5 from Methanocorpusculum labreanum (strain ATCC 43576 / DSM 4855 / Z).